Consider the following 196-residue polypeptide: MADS-box protein FLOWERING LOCUS C (196 aa).

Residues 1 to 61 (MGRKKLEIKR…GKLYSFSSGD (61 aa)) form the MADS-box domain. Residues 8 to 15 (IKRIENKS) carry the Nuclear localization signal motif. The 91-residue stretch at 80 to 170 (ALDHQSKALN…ASQMENNHHV (91 aa)) folds into the K-box domain.

As to expression, high expression in the vegetative apex and in root tissue and lower expression in leaves and stems. Not detected in young tissues of the inflorescence. Before fertilization, expressed in ovules, but not in pollen or stamens, of non-vernalized plants. After vernalization, not detected in ovules.

It localises to the nucleus. Putative transcription factor that seems to play a central role in the regulation of flowering time in the late-flowering phenotype by interacting with 'FRIGIDA', the autonomous and the vernalization flowering pathways. Inhibits flowering by repressing 'SUPPRESSOR OF OVEREXPRESSION OF CONSTANS 1'. At elevated temperatures (e.g. 29 degrees Celsius), maintained at high levels in a JMJ30/JMJ32-dependent manner to prevent extreme precocious flowering. This chain is MADS-box protein FLOWERING LOCUS C, found in Arabidopsis thaliana (Mouse-ear cress).